The following is a 190-amino-acid chain: Dynactin subunit 6 (190 aa).

Threonine 186 is subject to Phosphothreonine; by CDK1.

It belongs to the dynactin subunits 5/6 family. Dynactin subunit 6 subfamily. In terms of assembly, subunit of dynactin, a multiprotein complex part of a tripartite complex with dynein and a adapter, such as BICDL1, BICD2 or HOOK3. The dynactin complex is built around ACTR1A/ACTB filament and consists of an actin-related filament composed of a shoulder domain, a pointed end and a barbed end. Its length is defined by its flexible shoulder domain. The soulder is composed of 2 DCTN1 subunits, 4 DCTN2 and 2 DCTN3. The 4 DCNT2 (via N-terminus) bind the ACTR1A filament and act as molecular rulers to determine the length. The pointed end is important for binding dynein-dynactin cargo adapters. Consists of 4 subunits: ACTR10, DCNT4, DCTN5 and DCTN6. Within the complex DCTN6 forms a heterodimer with DCTN5. The barbed end is composed of a CAPZA1:CAPZB heterodimers, which binds ACTR1A/ACTB filament and dynactin and stabilizes dynactin. Interacts with PLK1. Interacts with N4BP2L1. Phosphorylation at Thr-186 by CDK1 during mitotic prometaphase creates a binding site for PLK1 that facilitates its recruitment to kinetochores.

It localises to the cytoplasm. It is found in the cytoskeleton. Its subcellular location is the chromosome. The protein resides in the centromere. The protein localises to the kinetochore. Part of the dynactin complex that activates the molecular motor dynein for ultra-processive transport along microtubules. The sequence is that of Dynactin subunit 6 (DCTN6) from Pongo abelii (Sumatran orangutan).